The primary structure comprises 183 residues: Peptide deformylase-like (183 aa).

Residue Glu140 is part of the active site.

Belongs to the polypeptide deformylase family.

This chain is Peptide deformylase-like, found in Rickettsia conorii (strain ATCC VR-613 / Malish 7).